An 858-amino-acid polypeptide reads, in one-letter code: Leucine--tRNA ligase (858 aa).

A 'HIGH' region motif is present at residues 42-52 (PYPSGNLHMGH). Positions 584–594 (NPNRSDSSRYI) are enriched in polar residues. The interval 584-611 (NPNRSDSSRYIPSNLVDPNDPKDPETGE) is disordered. The 'KMSKS' region signature appears at 619–623 (TMSKS). Residue Lys-622 participates in ATP binding.

The protein belongs to the class-I aminoacyl-tRNA synthetase family.

The protein localises to the cytoplasm. The enzyme catalyses tRNA(Leu) + L-leucine + ATP = L-leucyl-tRNA(Leu) + AMP + diphosphate. This chain is Leucine--tRNA ligase, found in Cyanothece sp. (strain PCC 7425 / ATCC 29141).